Consider the following 326-residue polypeptide: Protein GVP36 (326 aa).

The residue at position 2 (serine 2) is an N-acetylserine. Position 2 is a phosphoserine (serine 2). Glycyl lysine isopeptide (Lys-Gly) (interchain with G-Cter in ubiquitin) cross-links involve residues lysine 13, lysine 305, and lysine 313. Residues 299-326 (AEEPEAKPEVAEEEKPQTAISMNDEDDA) are disordered. Residues 302–314 (PEAKPEVAEEEKP) are compositionally biased toward basic and acidic residues. Residue serine 319 is modified to Phosphoserine.

It is found in the golgi apparatus membrane. The chain is Protein GVP36 (GVP36) from Saccharomyces cerevisiae (strain ATCC 204508 / S288c) (Baker's yeast).